The following is a 356-amino-acid chain: Alanine racemase, catabolic (356 aa).

Residue Lys-35 is the Proton acceptor; specific for D-alanine of the active site. Position 35 is an N6-(pyridoxal phosphate)lysine (Lys-35). Arg-130 is a substrate binding site. The active-site Proton acceptor; specific for L-alanine is the Tyr-253. Met-301 contacts substrate.

The protein belongs to the alanine racemase family. It depends on pyridoxal 5'-phosphate as a cofactor.

The catalysed reaction is L-alanine = D-alanine. Its function is as follows. Isomerizes L-alanine to D-alanine which is then oxidized to pyruvate by DadA. This is Alanine racemase, catabolic (dadX) from Salmonella typhi.